The following is a 1369-amino-acid chain: Rho guanine nucleotide exchange factor 10 (1369 aa).

The disordered stretch occupies residues 1–106 (MRPPGFLSRA…ETTPVAEPTK (106 aa)). A compositionally biased stretch (acidic residues) spans 46 to 64 (NNEEEEGEQFDFDSGDEIP). Residues 83-100 (EAPAPTGGEDGAGAETTP) show a composition bias toward low complexity. Ser180 bears the Phosphoserine mark. Residues 184–254 (EAETPEVTED…ENSDSEPDEM (71 aa)) form a disordered region. Over residues 196–209 (PNSLSSEEPPTSED) the composition is skewed to polar residues. Positions 304 to 355 (KKQLSHDLTRLKEHYEKKMRDLMASTVGVVEIQQLRQKHELKMQKLVKAAKD) form a coiled coil. At Ser379 the chain carries Phosphoserine. The 188-residue stretch at 421–608 (VRRYILGSVV…ETLAEKLNER (188 aa)) folds into the DH domain. Disordered stretches follow at residues 1226–1260 (KDKS…LSQG) and 1277–1297 (QKSD…SSSL). The span at 1279 to 1296 (SDLSSSSGSLSLSHGSSS) shows a compositional bias: low complexity. The residue at position 1287 (Ser1287) is a Phosphoserine. Gln1338 bears the N5-methylglutamine mark.

Methylated at Gln-1338 by N6AMT1.

May play a role in developmental myelination of peripheral nerves. The protein is Rho guanine nucleotide exchange factor 10 (ARHGEF10) of Homo sapiens (Human).